The primary structure comprises 427 residues: UDP-N-acetyl-D-mannosamine dehydrogenase (427 aa).

NAD(+)-binding residues include Tyr19, Ile20, Asp39, Arg44, Thr91, and Thr130. Arg155, Val156, Lys207, Asn211, Arg214, His245, Arg247, and Gly258 together coordinate UDP-N-acetyl-alpha-D-mannosaminouronate. Lys207 acts as the Proton donor/acceptor in catalysis. Cys261 acts as the Nucleophile in catalysis. Residues Tyr318 and Lys319 each coordinate UDP-N-acetyl-alpha-D-mannosaminouronate. Residue Arg326 coordinates NAD(+). Lys404 is a UDP-N-acetyl-alpha-D-mannosaminouronate binding site.

It belongs to the UDP-glucose/GDP-mannose dehydrogenase family. In terms of assembly, homotetramer; probably dimer of dimers.

It carries out the reaction UDP-N-acetyl-alpha-D-mannosamine + 2 NAD(+) + H2O = UDP-N-acetyl-alpha-D-mannosaminouronate + 2 NADH + 3 H(+). In terms of biological role, catalyzes the four-electron oxidation of UDP-N-acetyl-D-mannosamine (UDP-ManNAc), reducing NAD(+) and releasing UDP-N-acetylmannosaminuronic acid (UDP-ManNAcA). Cannot use NADP instead of NAD. This is UDP-N-acetyl-D-mannosamine dehydrogenase (wecC) from Methanococcus maripaludis (strain DSM 14266 / JCM 13030 / NBRC 101832 / S2 / LL).